The following is a 423-amino-acid chain: Enolase (423 aa).

Q163 is a (2R)-2-phosphoglycerate binding site. Residue E205 is the Proton donor of the active site. 3 residues coordinate Mg(2+): D242, E285, and D312. Residues K337, R366, S367, and K388 each coordinate (2R)-2-phosphoglycerate. K337 (proton acceptor) is an active-site residue.

Belongs to the enolase family. Mg(2+) is required as a cofactor.

The protein resides in the cytoplasm. It localises to the secreted. The protein localises to the cell surface. It carries out the reaction (2R)-2-phosphoglycerate = phosphoenolpyruvate + H2O. It functions in the pathway carbohydrate degradation; glycolysis; pyruvate from D-glyceraldehyde 3-phosphate: step 4/5. In terms of biological role, catalyzes the reversible conversion of 2-phosphoglycerate (2-PG) into phosphoenolpyruvate (PEP). It is essential for the degradation of carbohydrates via glycolysis. The chain is Enolase from Desulforapulum autotrophicum (strain ATCC 43914 / DSM 3382 / VKM B-1955 / HRM2) (Desulfobacterium autotrophicum).